The chain runs to 232 residues: MTFLILTILATVTPSLYSHVVQRELRVNFEPLAGQRDSWPVARAAMVTFDARSEKAREFSECRMINSMHELSRELMDSPEHTVKRASKEEMDDLVQRCSGSAEGRSWFIWPDTKWCGPGTDAKNESDLGPLEADKCCRTHDHCDYIGAGETKYGLTNKSFFTKLNCKCEAAFDQCLKESIDRAEGSAKSSMEGLHSFYFNTYSPECYEVKCSRKRDAECTNGIAIWKDSYKS.

Positions methionine 1–serine 18 are cleaved as a signal peptide. The propeptide occupies histidine 19–arginine 105. Tryptophan 115, glycine 117, and glycine 119 together coordinate Ca(2+). 5 disulfide bridges follow: cysteine 116–cysteine 137, cysteine 136–cysteine 175, cysteine 143–cysteine 168, cysteine 166–cysteine 206, and cysteine 211–cysteine 219. Asparagine 124 is a glycosylation site (N-linked (GlcNAc...) asparagine). The active site involves histidine 140. Aspartate 141 is a Ca(2+) binding site. Asparagine 157 carries an N-linked (GlcNAc...) asparagine glycan. Positions lysine 214–alanine 217 are excised as a propeptide.

Belongs to the phospholipase A2 family. Group III subfamily. In terms of assembly, heterodimer composed of a small subunit and a large subunit; disulfid-linked. Ca(2+) is required as a cofactor. In terms of tissue distribution, expressed by the venom gland.

The protein resides in the secreted. The enzyme catalyses a 1,2-diacyl-sn-glycero-3-phosphocholine + H2O = a 1-acyl-sn-glycero-3-phosphocholine + a fatty acid + H(+). In terms of biological role, scorpion venom phospholipase A2 (PLA2) that shows high hydrolytic activities towards lecithin and acts as an effective blocker of all angiogenesis key steps in vivo and in vitro. It has no effect on apoptosis and does not display hemolytic, inflammatory or neurotoxic effects. PLA2 catalyzes the calcium-dependent hydrolysis of the 2-acyl groups in 3-sn-phosphoglycerides. This is Phospholipase A2 hemilipin from Hemiscorpius lepturus (Scorpion).